We begin with the raw amino-acid sequence, 145 residues long: Transcription antitermination protein NusB (145 aa).

Belongs to the NusB family.

Functionally, involved in transcription antitermination. Required for transcription of ribosomal RNA (rRNA) genes. Binds specifically to the boxA antiterminator sequence of the ribosomal RNA (rrn) operons. The protein is Transcription antitermination protein NusB of Citrifermentans bemidjiense (strain ATCC BAA-1014 / DSM 16622 / JCM 12645 / Bem) (Geobacter bemidjiensis).